Here is a 365-residue protein sequence, read N- to C-terminus: 4-hydroxy-tetrahydrodipicolinate synthase 1, chloroplastic (365 aa).

Residues 1-39 (MSALKNYGLISIDSALHFPRSNQLQSYKRRNAKWVSPIA) constitute a chloroplast transit peptide. Position 108 (Thr-108) interacts with pyruvate. Tyr-194 serves as the catalytic Proton donor/acceptor. Lys-222 (schiff-base intermediate with substrate) is an active-site residue. Ile-261 contacts pyruvate.

It belongs to the DapA family.

It is found in the plastid. It localises to the chloroplast. It catalyses the reaction L-aspartate 4-semialdehyde + pyruvate = (2S,4S)-4-hydroxy-2,3,4,5-tetrahydrodipicolinate + H2O + H(+). It functions in the pathway amino-acid biosynthesis; L-lysine biosynthesis via DAP pathway; (S)-tetrahydrodipicolinate from L-aspartate: step 3/4. Functionally, catalyzes the condensation of (S)-aspartate-beta-semialdehyde [(S)-ASA] and pyruvate to 4-hydroxy-tetrahydrodipicolinate (HTPA). This is 4-hydroxy-tetrahydrodipicolinate synthase 1, chloroplastic (DHDPS1) from Arabidopsis thaliana (Mouse-ear cress).